The primary structure comprises 107 residues: Protein TAP1 (107 aa).

A signal peptide spans 1–23; sequence MESKRVDVLVGLMLIMAIFGVHS.

In terms of tissue distribution, stamen.

The protein is Protein TAP1 (TAP1) of Antirrhinum majus (Garden snapdragon).